Here is a 75-residue protein sequence, read N- to C-terminus: uncharacterized protein (75 aa).

The N-terminal stretch at 1–19 is a signal peptide; that stretch reads MKKTAAIISACMLTFALSA. Residue cysteine 20 is the site of N-palmitoyl cysteine attachment. The S-diacylglycerol cysteine moiety is linked to residue cysteine 20.

To E.coli YgdR.

It localises to the cell membrane. This is an uncharacterized protein from Escherichia coli O6:H1 (strain CFT073 / ATCC 700928 / UPEC).